The chain runs to 1492 residues: DNA polymerase alpha catalytic subunit (1492 aa).

Disordered regions lie at residues 34–112 (DFIV…VEQS), 162–195 (SVTLESREEQERRRQSEQLKQQANIGQNQSDVNP), and 210–234 (ANSYQSKQNSHSVSKSKPGDHEMAN). Positions 42–55 (YGYRDHGGEIWDRD) are enriched in basic and acidic residues. Over residues 93 to 105 (NAASTNPSAQQKP) the composition is skewed to polar residues. Over residues 166-178 (ESREEQERRRQSE) the composition is skewed to basic and acidic residues. Polar residues-rich tracts occupy residues 184–194 (ANIGQNQSDVN) and 210–224 (ANSYQSKQNSHSVSK). Residues cysteine 1314, cysteine 1317, cysteine 1341, cysteine 1344, cysteine 1375, cysteine 1380, cysteine 1393, and cysteine 1398 each coordinate Zn(2+). Residues 1314 to 1344 (CPHCAHNYHFPGILVPSSNNTELTGLACVKC) form a CysA-type zinc finger. The CysB motif signature appears at 1375–1398 (CKEPQCGMKTNQLLLNNKCIVKGC).

Belongs to the DNA polymerase type-B family.

It is found in the nucleus. It carries out the reaction DNA(n) + a 2'-deoxyribonucleoside 5'-triphosphate = DNA(n+1) + diphosphate. In terms of biological role, polymerase alpha in a complex with DNA primase is a replicative polymerase. This chain is DNA polymerase alpha catalytic subunit, found in Sterkiella nova (Ciliate).